The primary structure comprises 298 residues: Olfactory receptor 5AK3 (298 aa).

The Extracellular segment spans residues 1–25 (MGRGNSTEVTEFHLLGFGVQHEFQH). Asn5 is a glycosylation site (N-linked (GlcNAc...) asparagine). Residues 26 to 46 (VLFIVLLLIYVTSLIGNIGMI) form a helical membrane-spanning segment. Over 47–54 (LLIKTDSR) the chain is Cytoplasmic. The chain crosses the membrane as a helical span at residues 55-75 (LQTPMYFFPQHLAFVDICYTS). Residues 76 to 99 (AITPKMLQSFTEENNLITFRGCVI) lie on the Extracellular side of the membrane. Cysteines 97 and 189 form a disulfide. A helical transmembrane segment spans residues 100-120 (QFLVYATFATSDCYLLAIMAM). The Cytoplasmic segment spans residues 121-133 (DCYVAICKPLRYP). The helical transmembrane segment at 134 to 154 (MIMSQTVYIQLVAGSYIIGSI) threads the bilayer. N-linked (GlcNAc...) asparagine glycosylation occurs at Asn155. The Extracellular segment spans residues 155 to 196 (NASVHTGFTFSLSFCKSNKINHFFCDGLPILALSCSNIDINI). The helical transmembrane segment at 197 to 217 (ILDVVFVGFDLMFTELVIIFS) threads the bilayer. Residues 218–237 (YIYIMVTILKMSSTAGRKKS) are Cytoplasmic-facing. Residues 238–258 (FSTCASHLTAVTIFYGTLSYM) traverse the membrane as a helical segment. Residues 259–271 (YLQPQSNNSQENM) lie on the Extracellular side of the membrane. Asn265 carries N-linked (GlcNAc...) asparagine glycosylation. A helical membrane pass occupies residues 272 to 292 (KVASIFYGTVIPMLNPLIYSL). The Cytoplasmic segment spans residues 293-298 (RNKEGK).

This sequence belongs to the G-protein coupled receptor 1 family.

It is found in the cell membrane. Odorant receptor. The chain is Olfactory receptor 5AK3 (OR5AK3P) from Homo sapiens (Human).